A 112-amino-acid polypeptide reads, in one-letter code: Colipase (112 aa).

The first 17 residues, 1 to 17 (MEKVLALLLVTLTVAYA), serve as a signal peptide directing secretion. A propeptide spans 18–22 (VPDPR) (enterostatin, activation peptide). Cystine bridges form between Cys-34–Cys-45, Cys-40–Cys-56, Cys-44–Cys-78, Cys-66–Cys-86, and Cys-80–Cys-104.

Belongs to the colipase family. As to quaternary structure, forms a 1:1 stoichiometric complex with pancreatic lipase. In terms of tissue distribution, expressed by the pancreas.

The protein resides in the secreted. Its function is as follows. Colipase is a cofactor of pancreatic lipase. It allows the lipase to anchor itself to the lipid-water interface. Without colipase the enzyme is washed off by bile salts, which have an inhibitory effect on the lipase. Enterostatin has a biological activity as a satiety signal. This is Colipase (CLPS) from Sus scrofa (Pig).